We begin with the raw amino-acid sequence, 349 residues long: UDP-N-acetylenolpyruvoylglucosamine reductase (349 aa).

The FAD-binding PCMH-type domain maps to 24–197 (FGIAATARFA…VSVTFRLPKQ (174 aa)). Arg-173 is a catalytic residue. Catalysis depends on Ser-249, which acts as the Proton donor. The active site involves Glu-345.

Belongs to the MurB family. FAD is required as a cofactor.

It localises to the cytoplasm. It carries out the reaction UDP-N-acetyl-alpha-D-muramate + NADP(+) = UDP-N-acetyl-3-O-(1-carboxyvinyl)-alpha-D-glucosamine + NADPH + H(+). It functions in the pathway cell wall biogenesis; peptidoglycan biosynthesis. Its function is as follows. Cell wall formation. This is UDP-N-acetylenolpyruvoylglucosamine reductase from Burkholderia lata (strain ATCC 17760 / DSM 23089 / LMG 22485 / NCIMB 9086 / R18194 / 383).